The chain runs to 341 residues: Nicotinate-nucleotide--dimethylbenzimidazole phosphoribosyltransferase (341 aa).

The active-site Proton acceptor is E310.

Belongs to the CobT family.

It carries out the reaction 5,6-dimethylbenzimidazole + nicotinate beta-D-ribonucleotide = alpha-ribazole 5'-phosphate + nicotinate + H(+). It functions in the pathway nucleoside biosynthesis; alpha-ribazole biosynthesis; alpha-ribazole from 5,6-dimethylbenzimidazole: step 1/2. Its function is as follows. Catalyzes the synthesis of alpha-ribazole-5'-phosphate from nicotinate mononucleotide (NAMN) and 5,6-dimethylbenzimidazole (DMB). This chain is Nicotinate-nucleotide--dimethylbenzimidazole phosphoribosyltransferase, found in Vibrio cholerae serotype O1 (strain ATCC 39315 / El Tor Inaba N16961).